The primary structure comprises 590 residues: Myo-inositol transporter 3 (590 aa).

Positions 1–26 are enriched in basic and acidic residues; the sequence is MRTTHIEDRDNNSLENKHTDHIEGVE. Residues 1-40 form a disordered region; sequence MRTTHIEDRDNNSLENKHTDHIEGVENGKGTQEPPSPSGF. Over 1–57 the chain is Cytoplasmic; the sequence is MRTTHIEDRDNNSLENKHTDHIEGVENGKGTQEPPSPSGFGGHLIDENLVHVEGEDK. The chain crosses the membrane as a helical span at residues 58-78; it reads VTWYLCFLISASAIAGFLFGY. The Extracellular segment spans residues 79–105; that stretch reads DTGVVGVALPLVGTDLGGNELNSSQQE. Asn100 carries N-linked (GlcNAc...) asparagine glycosylation. Residues 106–126 form a helical membrane-spanning segment; it reads IITAGTTIGAIFGSAILGGWG. Residues 127–132 lie on the Cytoplasmic side of the membrane; that stretch reads DHLGRK. The chain crosses the membrane as a helical span at residues 133 to 153; the sequence is MAILISDVFFTVGAVIIASSY. The Extracellular portion of the chain corresponds to 154 to 157; it reads SVPQ. The helical transmembrane segment at 158–178 threads the bilayer; sequence IIVGRIVLGVGVGGAAVIAPL. The Cytoplasmic segment spans residues 179–192; the sequence is FITETAPTAVRGRC. A helical membrane pass occupies residues 193–213; the sequence is IGVNAFFIPFGQLVADSIGAG. Residues 214–222 lie on the Extracellular side of the membrane; the sequence is VQNMHGGWR. Residues 223-243 form a helical membrane-spanning segment; the sequence is LLFALGAVPSLIQLLLFHYLP. At 244–325 the chain is on the cytoplasmic side; that stretch reads ESPRILIVKG…AVSVLQAAGQ (82 aa). Residues 326–346 form a helical membrane-spanning segment; that stretch reads LCGFNTLLYYAGTLFGLLGLS. Topologically, residues 347–349 are extracellular; the sequence is NPA. Residues 350 to 370 traverse the membrane as a helical segment; that stretch reads LGGLIPAGTNAVFVLIGMSTV. Over 371-376 the chain is Cytoplasmic; that stretch reads DKIGRR. Residues 377-397 form a helical membrane-spanning segment; sequence GLLLVGVPVLLLGLVWNIIGF. At 398 to 420 the chain is on the extracellular side; sequence YYMCKPTGGFLDTSYSYDTTNVG. Residues 421-441 traverse the membrane as a helical segment; that stretch reads IVIGGIVFYVAGFGLTYSHLV. At 442–455 the chain is on the cytoplasmic side; it reads WYQAEYLALEVRSM. A helical membrane pass occupies residues 456-476; that stretch reads GSGVATTVCWIANLVVSVSYL. Over 477-485 the chain is Extracellular; it reads SELETMTPS. A helical transmembrane segment spans residues 486–506; sequence GTYGFYLGLSVIAFVFVVFCF. The Cytoplasmic portion of the chain corresponds to 507-590; that stretch reads PETKQLSIDE…GGKRKPQVLV (84 aa).

The protein belongs to the major facilitator superfamily. Sugar transporter (TC 2.A.1.1) family.

It is found in the cell membrane. The enzyme catalyses myo-inositol(out) + H(+)(out) = myo-inositol(in) + H(+)(in). Its function is as follows. Transporter for myo-inositol. This chain is Myo-inositol transporter 3, found in Cryptococcus neoformans var. grubii serotype A (strain H99 / ATCC 208821 / CBS 10515 / FGSC 9487) (Filobasidiella neoformans var. grubii).